Reading from the N-terminus, the 481-residue chain is Surface lipoprotein assembly modifier 2 (481 aa).

Positions 1–24 are cleaved as a signal peptide; it reads MKNGVKQLFLLSLIGLSLTNVAWA. The tract at residues 24–192 is N-terminal domain; sequence AEVARPKNDT…QYLLTLNQRN (169 aa). The C-terminal probable beta barrel stretch occupies residues 193-481; sequence QWIWQVGLNF…RIYLEIGKIF (289 aa). 14 consecutive transmembrane segments (beta stranded) span residues 194–204, 223–243, 248–257, 271–281, 285–295, 315–325, 329–339, 353–363, 368–377, 390–399, 404–414, 432–441, 448–458, and 471–481; these read WIWQVGLNFLN, AWEKESGQGVGYSLSVEKKWP, FFSKTMFNGN, TVRIGGGLGYQ, VEVSLFPFQEK, LGIRLENVDWL, WQISTALEYGE, YFVSSTLFYLP, FWFVGMDFHR, KTLRLGWGQD, ISSRLTFSYAN, YTTTITLWHR, LTPKLSWDYQK, and NRIYLEIGKIF.

Belongs to the Slam family.

It localises to the cell outer membrane. In terms of biological role, required for correct export to the cell surface of some cell outer membrane lipoproteins. In Haemophilus influenzae (strain ATCC 51907 / DSM 11121 / KW20 / Rd), this protein is Surface lipoprotein assembly modifier 2.